The sequence spans 176 residues: Macro domain-containing protein lmo2759 (176 aa).

Residues 1–175 (MEITIVKGDI…LYNKLINSEV (175 aa)) enclose the Macro domain.

The protein belongs to the MacroD-type family.

This is Macro domain-containing protein lmo2759 from Listeria monocytogenes serovar 1/2a (strain ATCC BAA-679 / EGD-e).